A 222-amino-acid chain; its full sequence is Small ribosomal subunit protein uS7m (222 aa).

Residues 1–14 (MTTKLARFAQKRWI) constitute a mitochondrion transit peptide.

This sequence belongs to the universal ribosomal protein uS7 family. As to quaternary structure, component of the mitochondrial ribosome small subunit (28S) which comprises a 12S rRNA and about 30 distinct proteins.

The protein resides in the mitochondrion. In Caenorhabditis elegans, this protein is Small ribosomal subunit protein uS7m (mrps-7).